A 427-amino-acid polypeptide reads, in one-letter code: Glutamate-1-semialdehyde 2,1-aminomutase (427 aa).

Lys263 carries the N6-(pyridoxal phosphate)lysine modification.

The protein belongs to the class-III pyridoxal-phosphate-dependent aminotransferase family. HemL subfamily. In terms of assembly, homodimer. Requires pyridoxal 5'-phosphate as cofactor.

Its subcellular location is the cytoplasm. It carries out the reaction (S)-4-amino-5-oxopentanoate = 5-aminolevulinate. It functions in the pathway porphyrin-containing compound metabolism; protoporphyrin-IX biosynthesis; 5-aminolevulinate from L-glutamyl-tRNA(Glu): step 2/2. The sequence is that of Glutamate-1-semialdehyde 2,1-aminomutase from Caldicellulosiruptor saccharolyticus (strain ATCC 43494 / DSM 8903 / Tp8T 6331).